A 123-amino-acid polypeptide reads, in one-letter code: MPTVNQLIRKPRIAPVKRNKVPALQANPQKRGVCTRVYTTTPKKPNSALRKVAKVRLTNGFEVIGYIPGEGHNLQEHSVVMIRGGRVKDLPGVRYHIIRGVLDTQGVKNRKQRRSKYGAKRPK.

Asp-89 carries the post-translational modification 3-methylthioaspartic acid.

Belongs to the universal ribosomal protein uS12 family. Part of the 30S ribosomal subunit. Contacts proteins S8 and S17. May interact with IF1 in the 30S initiation complex.

Its function is as follows. With S4 and S5 plays an important role in translational accuracy. Functionally, interacts with and stabilizes bases of the 16S rRNA that are involved in tRNA selection in the A site and with the mRNA backbone. Located at the interface of the 30S and 50S subunits, it traverses the body of the 30S subunit contacting proteins on the other side and probably holding the rRNA structure together. The combined cluster of proteins S8, S12 and S17 appears to hold together the shoulder and platform of the 30S subunit. This chain is Small ribosomal subunit protein uS12, found in Brucella anthropi (strain ATCC 49188 / DSM 6882 / CCUG 24695 / JCM 21032 / LMG 3331 / NBRC 15819 / NCTC 12168 / Alc 37) (Ochrobactrum anthropi).